Reading from the N-terminus, the 219-residue chain is RING-H2 finger protein ATL78 (219 aa).

Residues 57–77 (VMVLSVLLCALVCSLGLNSII) form a helical membrane-spanning segment. The segment at 131 to 173 (CAICLSEFVAEERVKLLPTCHHGFHVRCIDKWLSSHSSCPTCR) adopts an RING-type; atypical zinc-finger fold.

It belongs to the RING-type zinc finger family. ATL subfamily.

It localises to the membrane. It carries out the reaction S-ubiquitinyl-[E2 ubiquitin-conjugating enzyme]-L-cysteine + [acceptor protein]-L-lysine = [E2 ubiquitin-conjugating enzyme]-L-cysteine + N(6)-ubiquitinyl-[acceptor protein]-L-lysine.. It functions in the pathway protein modification; protein ubiquitination. This Arabidopsis thaliana (Mouse-ear cress) protein is RING-H2 finger protein ATL78 (ATL78).